A 207-amino-acid chain; its full sequence is GTP-binding protein RHO1 (207 aa).

18 to 25 (GDGACGKT) lines the GTP pocket. The short motif at 40–48 (YVPTVFDNY) is the Effector region element. Residues 65-69 (DTAGQ) and 123-126 (CKAD) each bind GTP. The interval 187-207 (GKQGKSKAKSDKKKKKKCVVL) is disordered. The segment covering 190 to 207 (GKSKAKSDKKKKKKCVVL) has biased composition (basic residues). Residue Cys204 is modified to Cysteine methyl ester. Cys204 carries the S-geranylgeranyl cysteine lipid modification. Residues 205 to 207 (VVL) constitute a propeptide, removed in mature form.

This sequence belongs to the small GTPase superfamily. Rho family.

Its subcellular location is the cell membrane. In terms of biological role, involved in the regulation of actin polarization. Rho proteins are required for distinct steps during polarized hyphal growth of A.gossypii. The protein is GTP-binding protein RHO1 (RHO1) of Eremothecium gossypii (strain ATCC 10895 / CBS 109.51 / FGSC 9923 / NRRL Y-1056) (Yeast).